The chain runs to 235 residues: MSTLETTRAELGLVVVYLNKAEARDKICRAIQYGSKFLSDGQPGTAQNVDKNTSLARKVFRLFKFVNDLHALISPVPKGTPLPLVLLGKSKNALLSTFLFLDQIVWLGRTGIYKDKERAEILGRISLFCWMGSSVCTSLVEVGELGRLSASIKKLEKEIGNKDKHQNEQYRAKVEKSNERSLALIKAGMDVVVAFGLLQLAPKKVTPRVTGAFGFASSLISCYQLLPSHPKSKMV.

Residues 1 to 91 (MSTLETTRAE…LPLVLLGKSK (91 aa)) lie on the Cytoplasmic side of the membrane. The helical transmembrane segment at 92–108 (NALLSTFLFLDQIVWLG) threads the bilayer. Topologically, residues 109–206 (RTGIYKDKER…LLQLAPKKVT (98 aa)) are lumenal. A helical transmembrane segment spans residues 207–226 (PRVTGAFGFASSLISCYQLL). The Cytoplasmic portion of the chain corresponds to 227-235 (PSHPKSKMV).

The protein belongs to the peroxin-11 family. As to quaternary structure, homooligomer. Interacts with ARC5 and FIS1B on peroxisomes. As to expression, expressed in roots and developing siliques.

The protein localises to the peroxisome membrane. Functionally, involved in peroxisomal proliferation. Promotes peroxisomal duplication, aggregation or elongation without fission. The chain is Peroxisomal membrane protein 11C (PEX11C) from Arabidopsis thaliana (Mouse-ear cress).